Reading from the N-terminus, the 604-residue chain is Proline--tRNA ligase (604 aa).

It belongs to the class-II aminoacyl-tRNA synthetase family. ProS type 1 subfamily. Homodimer.

The protein resides in the cytoplasm. The enzyme catalyses tRNA(Pro) + L-proline + ATP = L-prolyl-tRNA(Pro) + AMP + diphosphate. In terms of biological role, catalyzes the attachment of proline to tRNA(Pro) in a two-step reaction: proline is first activated by ATP to form Pro-AMP and then transferred to the acceptor end of tRNA(Pro). As ProRS can inadvertently accommodate and process non-cognate amino acids such as alanine and cysteine, to avoid such errors it has two additional distinct editing activities against alanine. One activity is designated as 'pretransfer' editing and involves the tRNA(Pro)-independent hydrolysis of activated Ala-AMP. The other activity is designated 'posttransfer' editing and involves deacylation of mischarged Ala-tRNA(Pro). The misacylated Cys-tRNA(Pro) is not edited by ProRS. This Nostoc punctiforme (strain ATCC 29133 / PCC 73102) protein is Proline--tRNA ligase.